Reading from the N-terminus, the 1755-residue chain is Transposon Ty1-NL1 Gag-Pol polyprotein (1755 aa).

4 stretches are compositionally biased toward polar residues: residues 1–23 (MESQ…SVTS), 48–60 (TKAN…TPAS), 71–86 (SPQT…GPYQ), and 131–152 (PQYP…GNTF). Disordered regions lie at residues 1 to 86 (MESQ…GPYQ), 131 to 171 (PQYP…YVRP), and 350 to 420 (QQES…IRGS). Positions 153-165 (TDSSSADSDMTST) are enriched in low complexity. The interval 299-401 (NNGIPINNKV…NSQSRTARAH (103 aa)) is RNA-binding. Over residues 363-372 (NPSDEKKDSR) the composition is skewed to basic and acidic residues. Polar residues predominate over residues 373–412 (TYTNTTKPKSITRNSQKPNNSQSRTARAHNVSTSNNSSGP). The active-site For protease activity; shared with dimeric partner is Asp461. The segment at 583–640 (NVHTSESTRKYPYPFIHRMLAHANAQTIRYSLKNNTITYFNESDVDWSSAIDYQCPDC) is integrase-type zinc finger-like. In terms of domain architecture, Integrase catalytic spans 660-835 (NSYEPFQYLH…AGLDISTLLP (176 aa)). Mg(2+) is bound by residues Asp671 and Asp736. Disordered stretches follow at residues 956–1120 (SKAV…TCPK) and 1146–1172 (DSFK…SNAY). Over residues 960–969 (SPTDSTPPST) the composition is skewed to low complexity. Positions 1005–1015 (STPQISDIEST) are enriched in polar residues. The span at 1038–1053 (ESSHTSKSKDFRHSDS) shows a compositional bias: basic and acidic residues. Composition is skewed to polar residues over residues 1054–1082 (YSDN…QTSE) and 1095–1106 (SIDTSSSESNSL). Positions 1178–1212 (KKRSLEDNETEIKVSRDTWNTKNMRSLEPPRSKKR) match the Bipartite nuclear localization signal motif. One can recognise a Reverse transcriptase Ty1/copia-type domain in the interval 1338–1476 (NNYYITQLDI…DILGLEIKYQ (139 aa)). The Mg(2+) site is built by Asp1346, Asp1427, Asp1428, Asp1610, Glu1652, and Asp1685. The RNase H Ty1/copia-type domain maps to 1610 to 1752 (DASYGNQPYY…IKTFKLLTNK (143 aa)).

In terms of assembly, the capsid protein forms a homotrimer, from which the VLPs are assembled. The protease is a homodimer, whose active site consists of two apposed aspartic acid residues. Initially, virus-like particles (VLPs) are composed of the structural unprocessed proteins Gag and Gag-Pol, and also contain the host initiator methionine tRNA (tRNA(i)-Met) which serves as a primer for minus-strand DNA synthesis, and a dimer of genomic Ty RNA. Processing of the polyproteins occurs within the particle and proceeds by an ordered pathway, called maturation. First, the protease (PR) is released by autocatalytic cleavage of the Gag-Pol polyprotein yielding capsid protein p45 and a Pol-p154 precursor protein. This cleavage is a prerequisite for subsequent processing of Pol-p154 at the remaining sites to release the mature structural and catalytic proteins. Maturation takes place prior to the RT reaction and is required to produce transposition-competent VLPs.

Its subcellular location is the cytoplasm. The protein resides in the nucleus. It carries out the reaction DNA(n) + a 2'-deoxyribonucleoside 5'-triphosphate = DNA(n+1) + diphosphate. The catalysed reaction is Endonucleolytic cleavage to 5'-phosphomonoester.. Its function is as follows. Capsid protein (CA) is the structural component of the virus-like particle (VLP), forming the shell that encapsulates the retrotransposons dimeric RNA genome. The particles are assembled from trimer-clustered units and there are holes in the capsid shells that allow for the diffusion of macromolecules. CA also has nucleocapsid-like chaperone activity, promoting primer tRNA(i)-Met annealing to the multipartite primer-binding site (PBS), dimerization of Ty1 RNA and initiation of reverse transcription. The aspartyl protease (PR) mediates the proteolytic cleavages of the Gag and Gag-Pol polyproteins after assembly of the VLP. Functionally, reverse transcriptase/ribonuclease H (RT) is a multifunctional enzyme that catalyzes the conversion of the retro-elements RNA genome into dsDNA within the VLP. The enzyme displays a DNA polymerase activity that can copy either DNA or RNA templates, and a ribonuclease H (RNase H) activity that cleaves the RNA strand of RNA-DNA heteroduplexes during plus-strand synthesis and hydrolyzes RNA primers. The conversion leads to a linear dsDNA copy of the retrotransposon that includes long terminal repeats (LTRs) at both ends. In terms of biological role, integrase (IN) targets the VLP to the nucleus, where a subparticle preintegration complex (PIC) containing at least integrase and the newly synthesized dsDNA copy of the retrotransposon must transit the nuclear membrane. Once in the nucleus, integrase performs the integration of the dsDNA into the host genome. This chain is Transposon Ty1-NL1 Gag-Pol polyprotein (TY1B-NL1), found in Saccharomyces cerevisiae (strain ATCC 204508 / S288c) (Baker's yeast).